Here is a 198-residue protein sequence, read N- to C-terminus: Ribonuclease HII (198 aa).

An RNase H type-2 domain is found at 11–198 (NLIAGVDEVG…GPVKRVLGLV (188 aa)). A divalent metal cation-binding residues include D17, E18, and D109.

This sequence belongs to the RNase HII family. Mn(2+) serves as cofactor. The cofactor is Mg(2+).

The protein localises to the cytoplasm. It carries out the reaction Endonucleolytic cleavage to 5'-phosphomonoester.. In terms of biological role, endonuclease that specifically degrades the RNA of RNA-DNA hybrids. This is Ribonuclease HII from Yersinia enterocolitica serotype O:8 / biotype 1B (strain NCTC 13174 / 8081).